We begin with the raw amino-acid sequence, 212 residues long: 2,3-bisphosphoglycerate-dependent phosphoglycerate mutase (212 aa).

Residues 9 to 16 (RHGQSEWN), 22 to 23 (TG), Arg61, 88 to 91 (ERDY), Lys99, 115 to 116 (RR), and 159 to 160 (GN) each bind substrate. The active-site Tele-phosphohistidine intermediate is His10. Catalysis depends on Glu88, which acts as the Proton donor/acceptor.

This sequence belongs to the phosphoglycerate mutase family. BPG-dependent PGAM subfamily. As to quaternary structure, homodimer.

The enzyme catalyses (2R)-2-phosphoglycerate = (2R)-3-phosphoglycerate. The protein operates within carbohydrate degradation; glycolysis; pyruvate from D-glyceraldehyde 3-phosphate: step 3/5. Its function is as follows. Catalyzes the interconversion of 2-phosphoglycerate and 3-phosphoglycerate. This Methylorubrum populi (strain ATCC BAA-705 / NCIMB 13946 / BJ001) (Methylobacterium populi) protein is 2,3-bisphosphoglycerate-dependent phosphoglycerate mutase.